The following is a 194-amino-acid chain: MKSVASPLCQFHGVFCLYQCRQCLAYHVCDGGAECVLLHTPESVICELTGNCMLGNIQEGQFLGPVPYRTLDNQVDRDAYHGMLACLKRDIVRYLQTWPDTTVIVQEIALGDGVTDTISAIIDETFGECLPVLGEAQGGYALVCSMYLHVIVSIYSTKTVYNSMLFKCTKNKKYDCIAKRVRTKWMRMLSTKDT.

The first 25 residues, 1-25 (MKSVASPLCQFHGVFCLYQCRQCLA), serve as a signal peptide directing secretion.

It belongs to the herpesviridae UL92 family. Interacts with ORF34.

It is found in the host nucleus. The protein localises to the host cytoplasm. Its function is as follows. Plays an important role in the expression of late genes. May play a role in viral replication. This chain is Protein ORF31 (ORF31), found in Homo sapiens (Human).